The following is a 1954-amino-acid chain: Chromodomain-helicase-DNA-binding protein 5 (1954 aa).

Disordered regions lie at residues M1 to S134 and P225 to Y338. Acidic residues-rich tracts occupy residues E17–D37 and N72–G90. The span at N96–K115 shows a compositional bias: basic residues. The span at A227–V237 shows a compositional bias: pro residues. Positions G251–A272 are enriched in basic residues. Acidic residues predominate over residues S291 to F301. The span at K321 to K330 shows a compositional bias: basic residues. 2 consecutive PHD-type zinc fingers follow at residues Q343–E390 and M416–P463. A histone-binding region spans residues Q343–T653. Residues L497 to F554 form the Chromo 1 domain. Residues D549–K571 form a disordered region. Over residues E561–K571 the composition is skewed to basic and acidic residues. Positions M592–T653 constitute a Chromo 2 domain. One can recognise a Helicase ATP-binding domain in the interval R712–E896. Residue D725–T732 coordinates ATP. Positions D847 to H850 match the DEAH box motif. The Helicase C-terminal domain maps to L1028–L1193. 5 disordered regions span residues M1209–S1253, Y1351–L1411, Y1524–G1564, A1597–V1640, and S1658–D1696. Acidic residues-rich tracts occupy residues S1355–S1366 and S1376–E1385. An N5-methylglutamine modification is found at Q1390. S1554 carries the post-translational modification Phosphoserine. Over residues S1554–G1564 the composition is skewed to low complexity. Composition is skewed to basic and acidic residues over residues D1600–K1627 and S1658–I1678.

Belongs to the SNF2/RAD54 helicase family. In terms of assembly, component of the nucleosome remodeling and deacetylase (NuRD) repressor complex, composed of core proteins MTA1, MTA2, MTA3, RBBP4, RBBP7, HDAC1, HDAC2, MBD2, MBD3, and peripherally associated proteins CDK2AP1, CDK2AP2, GATAD2A, GATAD2B, CHD3, CHD4 and CHD5. The exact stoichiometry of the NuRD complex is unknown, and some subunits such as MBD2 and MBD3, GATAD2A and GATAD2B, and CHD3, CHD4 and CHD5 define mutually exclusive NuRD complexes. Interacts with HDAC2. In terms of processing, methylated at Gln-1390 by N6AMT1. As to expression, preferentially expressed in total brain, fetal brain, and cerebellum. It is also moderately expressed in the adrenal gland and detected in testis.

It is found in the nucleus. Its subcellular location is the chromosome. It catalyses the reaction ATP + H2O = ADP + phosphate + H(+). Its function is as follows. ATP-dependent chromatin-remodeling factor that binds DNA through histones and regulates gene transcription. May specifically recognize and bind trimethylated 'Lys-27' (H3K27me3) and non-methylated 'Lys-4' of histone H3. Acts as a component of the histone deacetylase NuRD complex which participates in the remodeling of chromatin. Plays a role in the development of the nervous system by activating the expression of genes promoting neuron terminal differentiation. In parallel, it may also positively regulate the trimethylation of histone H3 at 'Lys-27' thereby specifically repressing genes that promote the differentiation into non-neuronal cell lineages. Regulates the expression of genes involved in cell proliferation and differentiation. Downstream activated genes may include CDKN2A that positively regulates the p53/TP53 pathway, which in turn, prevents cell proliferation. In spermatogenesis, it probably regulates histone hyperacetylation and the replacement of histones by transition proteins in chromatin, a crucial step in the condensation of spermatid chromatin and the production of functional spermatozoa. This Homo sapiens (Human) protein is Chromodomain-helicase-DNA-binding protein 5.